We begin with the raw amino-acid sequence, 251 residues long: Ditrans,polycis-undecaprenyl-diphosphate synthase ((2E,6E)-farnesyl-diphosphate specific) (251 aa).

Asp-29 is a catalytic residue. Asp-29 contacts Mg(2+). Substrate is bound by residues Gly-30–Lys-33, Trp-34, Arg-42, His-46, and Ser-74–Asp-76. Catalysis depends on Asn-77, which acts as the Proton acceptor. Residues Trp-78, Arg-80, Arg-197, and Arg-203–Ser-205 contribute to the substrate site. Glu-216 serves as a coordination point for Mg(2+).

This sequence belongs to the UPP synthase family. Homodimer. Mg(2+) serves as cofactor.

It catalyses the reaction 8 isopentenyl diphosphate + (2E,6E)-farnesyl diphosphate = di-trans,octa-cis-undecaprenyl diphosphate + 8 diphosphate. Its function is as follows. Catalyzes the sequential condensation of isopentenyl diphosphate (IPP) with (2E,6E)-farnesyl diphosphate (E,E-FPP) to yield (2Z,6Z,10Z,14Z,18Z,22Z,26Z,30Z,34E,38E)-undecaprenyl diphosphate (di-trans,octa-cis-UPP). UPP is the precursor of glycosyl carrier lipid in the biosynthesis of bacterial cell wall polysaccharide components such as peptidoglycan and lipopolysaccharide. The sequence is that of Ditrans,polycis-undecaprenyl-diphosphate synthase ((2E,6E)-farnesyl-diphosphate specific) from Buchnera aphidicola subsp. Baizongia pistaciae (strain Bp).